Reading from the N-terminus, the 280-residue chain is Probable endonuclease 4 (280 aa).

Residues His69, His109, Glu145, Asp179, His182, His216, Asp229, His231, and Glu261 each contribute to the Zn(2+) site.

Belongs to the AP endonuclease 2 family. The cofactor is Zn(2+).

The catalysed reaction is Endonucleolytic cleavage to 5'-phosphooligonucleotide end-products.. Functionally, endonuclease IV plays a role in DNA repair. It cleaves phosphodiester bonds at apurinic or apyrimidinic (AP) sites, generating a 3'-hydroxyl group and a 5'-terminal sugar phosphate. This chain is Probable endonuclease 4, found in Photorhabdus laumondii subsp. laumondii (strain DSM 15139 / CIP 105565 / TT01) (Photorhabdus luminescens subsp. laumondii).